The sequence spans 1107 residues: Protein translocase subunit SecA (1107 aa).

ATP-binding positions include Gln-169, 187–191, and Asp-688; that span reads GEGKT. The segment covering 1036–1066 has biased composition (basic and acidic residues); the sequence is RHAAEQRTDMSKYRTQKDDIEAQQKAQRDAA. Residues 1036–1107 form a disordered region; the sequence is RHAAEQRTDM…KFKQCHGRNL (72 aa). Residues Cys-1091, Cys-1093, Cys-1102, and His-1103 each contribute to the Zn(2+) site. Residues 1097–1107 are compositionally biased toward basic residues; the sequence is KKFKQCHGRNL.

Belongs to the SecA family. In terms of assembly, monomer and homodimer. Part of the essential Sec protein translocation apparatus which comprises SecA, SecYEG and auxiliary proteins SecDF. Other proteins may also be involved. It depends on Zn(2+) as a cofactor.

It is found in the cell inner membrane. Its subcellular location is the cytoplasm. The catalysed reaction is ATP + H2O + cellular proteinSide 1 = ADP + phosphate + cellular proteinSide 2.. Part of the Sec protein translocase complex. Interacts with the SecYEG preprotein conducting channel. Has a central role in coupling the hydrolysis of ATP to the transfer of proteins into and across the cell membrane, serving as an ATP-driven molecular motor driving the stepwise translocation of polypeptide chains across the membrane. The sequence is that of Protein translocase subunit SecA from Porphyromonas gingivalis (strain ATCC BAA-308 / W83).